We begin with the raw amino-acid sequence, 525 residues long: GMP synthase [glutamine-hydrolyzing] (525 aa).

A Glutamine amidotransferase type-1 domain is found at 9-207 (RILILDFGSQ…VRDICQCEAL (199 aa)). Cys-86 serves as the catalytic Nucleophile. Active-site residues include His-181 and Glu-183. Residues 208–400 (WTPAKIIDDA…LGLPYDMLYR (193 aa)) form the GMPS ATP-PPase domain. Residue 235-241 (SGGVDSS) coordinates ATP.

In terms of assembly, homodimer.

The catalysed reaction is XMP + L-glutamine + ATP + H2O = GMP + L-glutamate + AMP + diphosphate + 2 H(+). It functions in the pathway purine metabolism; GMP biosynthesis; GMP from XMP (L-Gln route): step 1/1. In terms of biological role, catalyzes the synthesis of GMP from XMP. The protein is GMP synthase [glutamine-hydrolyzing] of Escherichia fergusonii (strain ATCC 35469 / DSM 13698 / CCUG 18766 / IAM 14443 / JCM 21226 / LMG 7866 / NBRC 102419 / NCTC 12128 / CDC 0568-73).